The chain runs to 354 residues: Lipoyl synthase, mitochondrial (354 aa).

7 residues coordinate [4Fe-4S] cluster: Cys-91, Cys-96, Cys-102, Cys-122, Cys-126, Cys-129, and Ser-337. The Radical SAM core domain maps to 107-326; it reads DDSLATATIM…AEYSKKLGFL (220 aa).

Belongs to the radical SAM superfamily. Lipoyl synthase family. The cofactor is [4Fe-4S] cluster.

The protein resides in the mitochondrion. The catalysed reaction is [[Fe-S] cluster scaffold protein carrying a second [4Fe-4S](2+) cluster] + N(6)-octanoyl-L-lysyl-[protein] + 2 oxidized [2Fe-2S]-[ferredoxin] + 2 S-adenosyl-L-methionine + 4 H(+) = [[Fe-S] cluster scaffold protein] + N(6)-[(R)-dihydrolipoyl]-L-lysyl-[protein] + 4 Fe(3+) + 2 hydrogen sulfide + 2 5'-deoxyadenosine + 2 L-methionine + 2 reduced [2Fe-2S]-[ferredoxin]. Its pathway is protein modification; protein lipoylation via endogenous pathway; protein N(6)-(lipoyl)lysine from octanoyl-[acyl-carrier-protein]: step 2/2. Catalyzes the radical-mediated insertion of two sulfur atoms into the C-6 and C-8 positions of the octanoyl moiety bound to the lipoyl domains of lipoate-dependent enzymes, thereby converting the octanoylated domains into lipoylated derivatives. The polypeptide is Lipoyl synthase, mitochondrial (Caenorhabditis elegans).